The sequence spans 107 residues: Heme-degrading monooxygenase (107 aa).

In terms of domain architecture, ABM spans 2 to 94 (IIVTNTAKIT…YILDNKISYY (93 aa)). A Fe cation-binding site is contributed by Asn6. His76 is a heme binding site.

Belongs to the antibiotic biosynthesis monooxygenase family. Heme-degrading monooxygenase IsdG subfamily. Homodimer.

It is found in the cytoplasm. The catalysed reaction is heme b + 3 reduced [NADPH--hemoprotein reductase] + 3 O2 = biliverdin IXalpha + CO + Fe(2+) + 3 oxidized [NADPH--hemoprotein reductase] + 3 H2O + H(+). In terms of biological role, allows bacterial pathogens to use the host heme as an iron source. Catalyzes the oxidative degradation of the heme macrocyclic porphyrin ring to the biliverdin in the presence of a suitable electron donor such as ascorbate or NADPH--cytochrome P450 reductase, with subsequent release of free iron. The sequence is that of Heme-degrading monooxygenase from Bacillus cereus (strain AH187).